Consider the following 955-residue polypeptide: MAM domain-containing glycosylphosphatidylinositol anchor protein 1 (955 aa).

A signal peptide spans 1–18 (MEVTCLLLLALIPFHCRG). Ig-like domains follow at residues 24–123 (PAQA…KSIR) and 132–230 (PMLT…KAIT). N-linked (GlcNAc...) asparagine glycans are attached at residues Asn-42 and Asn-90. 2 cysteine pairs are disulfide-bonded: Cys-60–Cys-108 and Cys-157–Cys-214. N-linked (GlcNAc...) asparagine glycosylation is found at Asn-235, Asn-247, Asn-257, Asn-307, and Asn-331. Positions 240-323 (PALKLSVNET…VGNPAKKTVN (84 aa)) constitute an Ig-like 3 domain. An intrachain disulfide couples Cys-262 to Cys-308. 3 Ig-like domains span residues 338–432 (PDVI…VEVN), 440–532 (PTIS…AQVQ), and 539–631 (PEVE…FQVS). A disulfide bridge connects residues Cys-357 and Cys-415. Asn-432 carries N-linked (GlcNAc...) asparagine glycosylation. 2 disulfides stabilise this stretch: Cys-463–Cys-514 and Cys-560–Cys-615. The Fibronectin type-III domain maps to 643-743 (TPNPTRSHKL…SRIIHYTEPI (101 aa)). N-linked (GlcNAc...) asparagine glycans are attached at residues Asn-655 and Asn-747. The 168-residue stretch at 751–918 (NTCHFEDEKI…VTLKKGECPR (168 aa)) folds into the MAM domain. Residues 779–788 (LTQNPKRSPN) are compositionally biased toward polar residues. The segment at 779 to 798 (LTQNPKRSPNTGPPTDISGT) is disordered. Asn-826 carries N-linked (GlcNAc...) asparagine glycosylation. Ser-932 carries the GPI-anchor amidated serine lipid modification. Residues 933-955 (GAPCQSSPQLWGPMAIFLLALQR) constitute a propeptide, removed in mature form.

As to quaternary structure, interacts heterophilically through its MAM domain with proteins in axon-rich regions and through its Ig-like domains with proteins in differentiating muscle. Interacts (through the Ig-like domains) with NLGN2. As to expression, has been found in brain, heart, skeletal muscle and kidney. Found to be overexpressed in tumor tissues.

It is found in the cell membrane. In terms of biological role, required for radial migration of cortical neurons in the superficial layer of the neocortex. Plays a role in the formation or maintenance of inhibitory synapses. May function by inhibiting the activity of NLGN2. The polypeptide is MAM domain-containing glycosylphosphatidylinositol anchor protein 1 (MDGA1) (Homo sapiens (Human)).